A 511-amino-acid polypeptide reads, in one-letter code: MKDHLIVFDTTLRDGEQSPGASMTRDEKLRIARQLERMRVDVIEAGFPAASNGDFESVRAIAEAIRESTVCGLARANEADIRRAGEAIAPAARGRIHTFIATSPIHMEMKLRMSPDQVVEQAVRAIGWAKEYTDDIEFSAEDAGRSEIDFLCRIFEAVIKAGAKTINVPDTVGYNVPEQYAHTIRTLIERVPGADKVVWSVHCHNDLGLAVANSLAAVMAGARQVECTLNGLGERAGNAALEELVMAVRTRQDVFPCDTRIDATQIVPASKLVSGVTGFPVQPNKAIVGANAFAHESGIHQDGVLKHRETYEIMRAEDVGWGANKLVLGKHSGRNAFRSRLQEIGIVVASEEHLNHAFARFKELADKKHEIFDEDIQALMSDEVVTPDQEHYRLVASRFHSETGETPRADLTLSVDGQETRTSAEGSGPVDAAFKAIEAIAGSGTELLLYSVNAITTGTDAQGEVTVRLAREDKVVNGQGADTDIIVASAKAYLNALNKLHSKLERLNPQL.

Residues 5-267 (LIVFDTTLRD…DTRIDATQIV (263 aa)) enclose the Pyruvate carboxyltransferase domain. Residues aspartate 14, histidine 202, histidine 204, and asparagine 238 each contribute to the Mn(2+) site. The tract at residues 393–511 (RLVASRFHSE…SKLERLNPQL (119 aa)) is regulatory domain.

This sequence belongs to the alpha-IPM synthase/homocitrate synthase family. LeuA type 1 subfamily. In terms of assembly, homodimer. It depends on Mn(2+) as a cofactor.

The protein localises to the cytoplasm. The catalysed reaction is 3-methyl-2-oxobutanoate + acetyl-CoA + H2O = (2S)-2-isopropylmalate + CoA + H(+). It participates in amino-acid biosynthesis; L-leucine biosynthesis; L-leucine from 3-methyl-2-oxobutanoate: step 1/4. Functionally, catalyzes the condensation of the acetyl group of acetyl-CoA with 3-methyl-2-oxobutanoate (2-ketoisovalerate) to form 3-carboxy-3-hydroxy-4-methylpentanoate (2-isopropylmalate). This is 2-isopropylmalate synthase from Aromatoleum aromaticum (strain DSM 19018 / LMG 30748 / EbN1) (Azoarcus sp. (strain EbN1)).